The chain runs to 210 residues: Orotate phosphoribosyltransferase (210 aa).

Residues Arg94, Lys98, His100, and 120–128 each bind 5-phospho-alpha-D-ribose 1-diphosphate; that span reads EDLISTGGS. Ser124 contacts orotate.

It belongs to the purine/pyrimidine phosphoribosyltransferase family. PyrE subfamily. As to quaternary structure, homodimer. It depends on Mg(2+) as a cofactor.

The catalysed reaction is orotidine 5'-phosphate + diphosphate = orotate + 5-phospho-alpha-D-ribose 1-diphosphate. The protein operates within pyrimidine metabolism; UMP biosynthesis via de novo pathway; UMP from orotate: step 1/2. Catalyzes the transfer of a ribosyl phosphate group from 5-phosphoribose 1-diphosphate to orotate, leading to the formation of orotidine monophosphate (OMP). This chain is Orotate phosphoribosyltransferase, found in Bacillus cytotoxicus (strain DSM 22905 / CIP 110041 / 391-98 / NVH 391-98).